We begin with the raw amino-acid sequence, 288 residues long: 4-diphosphocytidyl-2-C-methyl-D-erythritol kinase (288 aa).

Residue lysine 8 is part of the active site. An ATP-binding site is contributed by 90–100 (PFGAGLGGGSS). Aspartate 132 is a catalytic residue.

It belongs to the GHMP kinase family. IspE subfamily.

The catalysed reaction is 4-CDP-2-C-methyl-D-erythritol + ATP = 4-CDP-2-C-methyl-D-erythritol 2-phosphate + ADP + H(+). The protein operates within isoprenoid biosynthesis; isopentenyl diphosphate biosynthesis via DXP pathway; isopentenyl diphosphate from 1-deoxy-D-xylulose 5-phosphate: step 3/6. Its function is as follows. Catalyzes the phosphorylation of the position 2 hydroxy group of 4-diphosphocytidyl-2C-methyl-D-erythritol. In Chlorobium chlorochromatii (strain CaD3), this protein is 4-diphosphocytidyl-2-C-methyl-D-erythritol kinase.